The following is a 135-amino-acid chain: Large ribosomal subunit protein eL27y (135 aa).

This sequence belongs to the eukaryotic ribosomal protein eL27 family.

This chain is Large ribosomal subunit protein eL27y (RPL27B), found in Arabidopsis thaliana (Mouse-ear cress).